We begin with the raw amino-acid sequence, 440 residues long: MFLAQEIIRKKRDGHALSDEEIRFFINGIRDNTISEGQIAALAMTIFFHDMTMPERVSLTMAMRDSGTVLDWKSLHLNGPIVDKHSTGGVGDVTSLMLGPMVAACGGYIPMISGRGLGHTGGTLDKLESIPGFDIFPDDNRFREIIKDVGVAIIGQTSSLAPADKRFYATRDITATVDSIPLITASILAKKLAEGLDALVMDVKVGSGAFMPTYELSEALAEAIVGVANGAGVRTTALLTDMNQVLASSAGNAVEVREAVQFLTGEYRNPRLFDVTMALCVEMLISGKLAKDDAEARAKLQAVLDNGKAAEVFGRMVAAQKGPTDFVENYAKYLPTAMLTKAVYADTEGFVSEMDTRALGMAVVAMGGGRRQASDTIDYSVGFTDMARLGDQVDGQRPLAVIHAKDENNWQEAAKAVKAAIKLADKAPESTPTVYRRISE.

The protein belongs to the thymidine/pyrimidine-nucleoside phosphorylase family. In terms of assembly, homodimer.

The enzyme catalyses thymidine + phosphate = 2-deoxy-alpha-D-ribose 1-phosphate + thymine. It functions in the pathway pyrimidine metabolism; dTMP biosynthesis via salvage pathway; dTMP from thymine: step 1/2. In terms of biological role, the enzymes which catalyze the reversible phosphorolysis of pyrimidine nucleosides are involved in the degradation of these compounds and in their utilization as carbon and energy sources, or in the rescue of pyrimidine bases for nucleotide synthesis. The polypeptide is Thymidine phosphorylase (Escherichia coli (strain K12 / DH10B)).